A 316-amino-acid polypeptide reads, in one-letter code: Olfactory receptor 2G6 (316 aa).

Topologically, residues 1–25 are extracellular; sequence MEETNNSSEKGFLLLGFSDQPQLER. Residues Asn5 and Asn6 are each glycosylated (N-linked (GlcNAc...) asparagine). The chain crosses the membrane as a helical span at residues 26–49; it reads FLFAIILYFYVLSLLGNTALILVC. Residues 50–57 are Cytoplasmic-facing; the sequence is CLDSRLHT. A helical membrane pass occupies residues 58 to 79; the sequence is PMYFFLSNLSCVDICFTTSVAP. Topologically, residues 80–100 are extracellular; the sequence is QLLVTMNKKDKTMSYGGCVAQ. Cys97 and Cys189 are disulfide-bonded. The helical transmembrane segment at 101–120 threads the bilayer; that stretch reads LYVAMGLGSSECILLAVMAY. At 121–139 the chain is on the cytoplasmic side; that stretch reads DRYAAVCRPLRYIAIMHPR. The helical transmembrane segment at 140-158 threads the bilayer; that stretch reads FCASLAGGAWLSGLITSLI. Over 159-195 the chain is Extracellular; sequence QCSLTVQLPLCGHRTLDHIFCEVPVLIKLACVDTTFN. The helical transmembrane segment at 196–219 threads the bilayer; it reads EAELFVASVVFLIVPVLLILVSYG. Residues 220–236 lie on the Cytoplasmic side of the membrane; the sequence is FITQAVLRIKSAAGRQK. The chain crosses the membrane as a helical span at residues 237–259; the sequence is AFGTCSSHLVVVIIFYGTIIFMY. Residues 260–272 are Extracellular-facing; it reads LQPANRRSKNQGK. Residues 273–292 form a helical membrane-spanning segment; sequence FVSLFYTIVTPLLNPIIYTL. At 293-316 the chain is on the cytoplasmic side; sequence RNKDVKGALRTLILGSAAGQSHKD.

Belongs to the G-protein coupled receptor 1 family.

It localises to the cell membrane. Odorant receptor. This is Olfactory receptor 2G6 (OR2G6) from Homo sapiens (Human).